Here is a 337-residue protein sequence, read N- to C-terminus: tRNA N6-adenosine threonylcarbamoyltransferase (337 aa).

The Fe cation site is built by His107 and His111. Substrate contacts are provided by residues Leu129–Gly133, Asp162, Gly175, and Asn271. Residue Asp299 participates in Fe cation binding.

This sequence belongs to the KAE1 / TsaD family. The cofactor is Fe(2+).

The protein localises to the cytoplasm. The catalysed reaction is L-threonylcarbamoyladenylate + adenosine(37) in tRNA = N(6)-L-threonylcarbamoyladenosine(37) in tRNA + AMP + H(+). Required for the formation of a threonylcarbamoyl group on adenosine at position 37 (t(6)A37) in tRNAs that read codons beginning with adenine. Is involved in the transfer of the threonylcarbamoyl moiety of threonylcarbamoyl-AMP (TC-AMP) to the N6 group of A37, together with TsaE and TsaB. TsaD likely plays a direct catalytic role in this reaction. In Sulfurovum sp. (strain NBC37-1), this protein is tRNA N6-adenosine threonylcarbamoyltransferase.